Here is a 445-residue protein sequence, read N- to C-terminus: NAD-specific glutamate dehydrogenase (445 aa).

Lys-124 is a catalytic residue. Position 235 to 241 (235 to 241) interacts with NAD(+); the sequence is GFGNVAW.

This sequence belongs to the Glu/Leu/Phe/Val dehydrogenases family. Homohexamer.

It carries out the reaction L-glutamate + NAD(+) + H2O = 2-oxoglutarate + NH4(+) + NADH + H(+). The sequence is that of NAD-specific glutamate dehydrogenase (gdhB) from Bacteroides fragilis (strain YCH46).